The sequence spans 171 residues: Co-chaperone protein HscB homolog (171 aa).

In terms of domain architecture, J spans 3 to 75 (SHFALFDLEP…SQRARYLLSL (73 aa)).

Belongs to the HscB family. Interacts with HscA and stimulates its ATPase activity.

Co-chaperone involved in the maturation of iron-sulfur cluster-containing proteins. Seems to help targeting proteins to be folded toward HscA. The chain is Co-chaperone protein HscB homolog from Azotobacter vinelandii.